Reading from the N-terminus, the 379-residue chain is Chaperone protein DnaJ (379 aa).

The 66-residue stretch at 5–70 folds into the J domain; sequence DYYEVLGVQK…QKRAAYDRFG (66 aa). Residues 137 to 215 form a CR-type zinc finger; that stretch reads GATTTVRVPT…CGGQGRVRKE (79 aa). The Zn(2+) site is built by C150, C153, C167, C170, C189, C192, C203, and C206. 4 CXXCXGXG motif repeats span residues 150 to 157, 167 to 174, 189 to 196, and 203 to 210; these read CESCNGTG, CPTCNGHG, CPACHGVG, and CRTCGGQG.

This sequence belongs to the DnaJ family. In terms of assembly, homodimer. The cofactor is Zn(2+).

It is found in the cytoplasm. Its function is as follows. Participates actively in the response to hyperosmotic and heat shock by preventing the aggregation of stress-denatured proteins and by disaggregating proteins, also in an autonomous, DnaK-independent fashion. Unfolded proteins bind initially to DnaJ; upon interaction with the DnaJ-bound protein, DnaK hydrolyzes its bound ATP, resulting in the formation of a stable complex. GrpE releases ADP from DnaK; ATP binding to DnaK triggers the release of the substrate protein, thus completing the reaction cycle. Several rounds of ATP-dependent interactions between DnaJ, DnaK and GrpE are required for fully efficient folding. Also involved, together with DnaK and GrpE, in the DNA replication of plasmids through activation of initiation proteins. The chain is Chaperone protein DnaJ from Rhodospirillum centenum (strain ATCC 51521 / SW).